The chain runs to 61 residues: MPVVHTCTYCGRSIEPGTGLMYVKNDGSVLWFCSSKCFKLWRMGRDPRKLKWTERYTQLRR.

Cys7, Cys10, Cys33, and Cys37 together coordinate Zn(2+). The segment at 7–37 adopts a C4-type zinc-finger fold; it reads CTYCGRSIEPGTGLMYVKNDGSVLWFCSSKC.

Belongs to the eukaryotic ribosomal protein eL24 family. As to quaternary structure, part of the 50S ribosomal subunit. Forms a cluster with proteins L3 and L14. Requires Zn(2+) as cofactor.

In terms of biological role, binds to the 23S rRNA. The chain is Large ribosomal subunit protein eL24 from Hyperthermus butylicus (strain DSM 5456 / JCM 9403 / PLM1-5).